Reading from the N-terminus, the 702-residue chain is Ribosomal RNA large subunit methyltransferase K/L (702 aa).

A THUMP domain is found at 43 to 154 (LIYQSLMWSR…KETASIALDL (112 aa)).

It belongs to the methyltransferase superfamily. RlmKL family.

The protein resides in the cytoplasm. The enzyme catalyses guanosine(2445) in 23S rRNA + S-adenosyl-L-methionine = N(2)-methylguanosine(2445) in 23S rRNA + S-adenosyl-L-homocysteine + H(+). It carries out the reaction guanosine(2069) in 23S rRNA + S-adenosyl-L-methionine = N(2)-methylguanosine(2069) in 23S rRNA + S-adenosyl-L-homocysteine + H(+). Its function is as follows. Specifically methylates the guanine in position 2445 (m2G2445) and the guanine in position 2069 (m7G2069) of 23S rRNA. This is Ribosomal RNA large subunit methyltransferase K/L from Salmonella paratyphi B (strain ATCC BAA-1250 / SPB7).